The following is a 493-amino-acid chain: ATP-dependent rRNA helicase RRP3 (493 aa).

2 stretches are compositionally biased toward basic and acidic residues: residues 26–42 (ALENQKKMQAASRKDSE) and 51–62 (ERPAKKQAKDEK). A disordered region spans residues 26 to 68 (ALENQKKMQAASRKDSESDSSDEEVERPAKKQAKDEKVEEPEE). Residues 73-101 (ESFAQLNLVPELIQACQNLNFTKPTPIQA) carry the Q motif motif. The region spanning 104 to 276 (IPPALAGSDV…RASLTNPVKC (173 aa)) is the Helicase ATP-binding domain. ATP is bound at residue 117–124 (AQTGSGKT). The DEAD box motif lies at 223–226 (DEAD). The Helicase C-terminal domain occupies 307 to 453 (LLNEFIGKTV…NIILTLRDSV (147 aa)). A disordered region spans residues 467-493 (RNKEKQARGKGRRGRMMAKENMDREEK). The segment covering 483–493 (MAKENMDREEK) has biased composition (basic and acidic residues).

The protein belongs to the DEAD box helicase family. DDX47/RRP3 subfamily. In terms of assembly, interacts with the SSU processome.

It localises to the nucleus. It catalyses the reaction ATP + H2O = ADP + phosphate + H(+). Its function is as follows. ATP-dependent rRNA helicase required for pre-ribosomal RNA processing. Involved in the maturation of the 35S-pre-rRNA and to its cleavage to mature 18S rRNA. The sequence is that of ATP-dependent rRNA helicase RRP3 from Candida glabrata (strain ATCC 2001 / BCRC 20586 / JCM 3761 / NBRC 0622 / NRRL Y-65 / CBS 138) (Yeast).